A 153-amino-acid polypeptide reads, in one-letter code: Large ribosomal subunit protein uL23m (153 aa).

A disordered region spans residues 131-153 (MADEQQRQGSDPQRGGVPNWFSL).

This sequence belongs to the universal ribosomal protein uL23 family. Component of the mitochondrial ribosome large subunit (39S) which comprises a 16S rRNA and about 50 distinct proteins.

The protein localises to the mitochondrion. This is Large ribosomal subunit protein uL23m (MRPL23) from Otolemur garnettii (Small-eared galago).